We begin with the raw amino-acid sequence, 41 residues long: Large ribosomal subunit protein bL36 (41 aa).

It belongs to the bacterial ribosomal protein bL36 family.

This is Large ribosomal subunit protein bL36 from Rhodopseudomonas palustris (strain TIE-1).